The following is a 457-amino-acid chain: UDP-N-acetylmuramate--L-alanine ligase (457 aa).

112 to 118 (GAHGKTS) lines the ATP pocket.

This sequence belongs to the MurCDEF family.

It is found in the cytoplasm. It carries out the reaction UDP-N-acetyl-alpha-D-muramate + L-alanine + ATP = UDP-N-acetyl-alpha-D-muramoyl-L-alanine + ADP + phosphate + H(+). It participates in cell wall biogenesis; peptidoglycan biosynthesis. In terms of biological role, cell wall formation. In Desulfosudis oleivorans (strain DSM 6200 / JCM 39069 / Hxd3) (Desulfococcus oleovorans), this protein is UDP-N-acetylmuramate--L-alanine ligase.